Reading from the N-terminus, the 612-residue chain is MACPF domain-containing protein NSL1 (612 aa).

In terms of domain architecture, MACPF spans 5–338; that stretch reads NFTRLDAHSA…PPIEELHQFL (334 aa).

This sequence belongs to the complement C6/C7/C8/C9 (TC 1.C.39) family.

Negatively controls the salicylic acid (SA)-mediated pathway of programmed cell death in plant immunity. The sequence is that of MACPF domain-containing protein NSL1 (NSL1) from Arabidopsis thaliana (Mouse-ear cress).